We begin with the raw amino-acid sequence, 306 residues long: HORMA domain-containing protein 2 (306 aa).

The HORMA domain occupies 29–232; it reads HESLVVVKKL…SGFHSMKVKV (204 aa). Position 271 is a phosphoserine (Ser271).

As to quaternary structure, interacts with HORMAD1. Post-translationally, phosphorylated in a SPO11-dependent manner. Specifically expressed in meiotic germ cells.

Its subcellular location is the nucleus. The protein resides in the chromosome. Its function is as follows. Essential for synapsis surveillance during meiotic prophase via the recruitment of ATR activity. Plays a key role in the male mid-pachytene checkpoint and the female meiotic prophase checkpoint: required for efficient build-up of ATR activity on unsynapsed chromosome regions, a process believed to form the basis of meiotic silencing of unsynapsed chromatin (MSUC) and meiotic prophase quality control in both sexes. Required for the DNA double-strand break-independent, BRCA1-dependent activation of ATR on the sex chromosomes that is essential for normal sex body formation. The sequence is that of HORMA domain-containing protein 2 (Hormad2) from Mus musculus (Mouse).